The chain runs to 408 residues: Argininosuccinate synthase (408 aa).

Residues 12–20 (AYSGGLDTS) and Ala-39 each bind ATP. L-citrulline is bound by residues Tyr-92 and Ser-97. Gly-122 contacts ATP. Positions 124, 128, and 129 each coordinate L-aspartate. An L-citrulline-binding site is contributed by Asn-128. L-citrulline is bound by residues Arg-132, Ser-183, Ser-192, Glu-268, and Tyr-280.

The protein belongs to the argininosuccinate synthase family. Type 1 subfamily. In terms of assembly, homotetramer.

Its subcellular location is the cytoplasm. It catalyses the reaction L-citrulline + L-aspartate + ATP = 2-(N(omega)-L-arginino)succinate + AMP + diphosphate + H(+). The protein operates within amino-acid biosynthesis; L-arginine biosynthesis; L-arginine from L-ornithine and carbamoyl phosphate: step 2/3. The polypeptide is Argininosuccinate synthase (Caulobacter vibrioides (strain ATCC 19089 / CIP 103742 / CB 15) (Caulobacter crescentus)).